A 455-amino-acid chain; its full sequence is L-serine dehydratase 2 (455 aa).

Belongs to the iron-sulfur dependent L-serine dehydratase family. It depends on [4Fe-4S] cluster as a cofactor. Activated by post-translational modification by a system involving at least three gene products. Activation is mimicked in vitro by iron and dithiothreitol. There is considerable evidence for a free-radical activation mechanism.

It catalyses the reaction L-serine = pyruvate + NH4(+). It participates in carbohydrate biosynthesis; gluconeogenesis. Functionally, also deaminates threonine, particularly when it is present in high concentration. The protein is L-serine dehydratase 2 (sdaB) of Escherichia coli (strain K12).